A 209-amino-acid chain; its full sequence is Nucleoside triphosphate pyrophosphatase (209 aa).

Asp79 functions as the Proton acceptor in the catalytic mechanism.

This sequence belongs to the Maf family. The cofactor is a divalent metal cation.

It is found in the cytoplasm. The enzyme catalyses a ribonucleoside 5'-triphosphate + H2O = a ribonucleoside 5'-phosphate + diphosphate + H(+). It carries out the reaction a 2'-deoxyribonucleoside 5'-triphosphate + H2O = a 2'-deoxyribonucleoside 5'-phosphate + diphosphate + H(+). In terms of biological role, nucleoside triphosphate pyrophosphatase. May have a dual role in cell division arrest and in preventing the incorporation of modified nucleotides into cellular nucleic acids. The sequence is that of Nucleoside triphosphate pyrophosphatase from Mycolicibacterium gilvum (strain PYR-GCK) (Mycobacterium gilvum (strain PYR-GCK)).